A 508-amino-acid chain; its full sequence is GTPase Obg (508 aa).

The 158-residue stretch at 2–159 (ARFVDRVVLH…HDVILELKSM (158 aa)) folds into the Obg domain. The 182-residue stretch at 160 to 341 (ADIGLVGFPS…LKYAMLDLVQ (182 aa)) folds into the OBG-type G domain. Residues 166 to 173 (GFPSAGKS), 191 to 195 (FTTLQ), 212 to 215 (DVPG), 292 to 295 (NKAD), and 322 to 324 (SAV) contribute to the GTP site. Residues Ser-173 and Thr-193 each coordinate Mg(2+). The 81-residue stretch at 364–444 (DARKKNKDFE…IGEVSFEWEP (81 aa)) folds into the OCT domain.

The protein belongs to the TRAFAC class OBG-HflX-like GTPase superfamily. OBG GTPase family. In terms of assembly, monomer. The cofactor is Mg(2+).

It is found in the cytoplasm. An essential GTPase which binds GTP, GDP and possibly (p)ppGpp with moderate affinity, with high nucleotide exchange rates and a fairly low GTP hydrolysis rate. Plays a role in control of the cell cycle, stress response, ribosome biogenesis and in those bacteria that undergo differentiation, in morphogenesis control. In Corynebacterium diphtheriae (strain ATCC 700971 / NCTC 13129 / Biotype gravis), this protein is GTPase Obg.